The primary structure comprises 930 residues: G patch domain-containing protein TGH (930 aa).

Lys-25 is covalently cross-linked (Glycyl lysine isopeptide (Lys-Gly) (interchain with G-Cter in ubiquitin)). Residues 76-152 (GWAPQSFTSS…PSAIPGPVPD (77 aa)) form a disordered region. The G-patch domain occupies 159–199 (SESIGVKLLLKMGWRRGHSIKEVRASSDARREARKAFLAFY). The SURP motif repeat unit spans residues 405–447 (LIEGFATFVSRCGKLYEDLSREKNQSNQLFDFLREGNGHDYYA). 3 disordered regions span residues 478–508 (AETR…GSFQ), 687–751 (RQVS…NEAA), and 773–930 (FEVP…RRRD). A compositionally biased stretch (basic and acidic residues) spans 489–498 (PLQRSLKETD). Residues 499-508 (TSASSGGSFQ) are compositionally biased toward polar residues. The span at 701 to 711 (IEEPEVEVEVE) shows a compositional bias: acidic residues. Residues 779–808 (EEIKSRSKPEDSSDKRLDRPGLKEKVEEKT) show a composition bias toward basic and acidic residues. The span at 848-857 (RRKRYNKKDR) shows a compositional bias: basic residues. Basic and acidic residues predominate over residues 858–877 (HRNDSESDSSSDYHSRDKQG). The span at 892-908 (RSSHKKHSKHRRTKKSS) shows a compositional bias: basic residues. Over residues 913–923 (SSDEEQKESRR) the composition is skewed to basic and acidic residues.

In terms of tissue distribution, expressed in vasculature of cotyledons and leaves, young meristematic tissues, trichomes and pistils.

The protein resides in the nucleus speckle. The protein localises to the nucleus. It is found in the nucleoplasm. Its function is as follows. Functions as a component of microRNA (miRNA) and small interfering RNA (siRNA) biogenesis. May assist DCL1 and DCL4 to efficiently process and/or recruit the precursors of miRNAs and siRNAs. In the miRNA biogenesis pathway, associates with the DCL1 complex that processes primary miRNAs (pri-miRNAs) into miRNAs. Binds pri-miRNAs and precursor miRNAs (pre-miRNAs). Is required for the interaction between pri-miRNAs and DRB1. Required for general proper plant growth and, in particular, initiation of vascular development. Interacts genetically with AMP1, a glutamate carboxypeptidase involved in the regulation of meristem function. This Arabidopsis thaliana (Mouse-ear cress) protein is G patch domain-containing protein TGH.